Reading from the N-terminus, the 392-residue chain is Multidrug resistance protein MdtL (392 aa).

Transmembrane regions (helical) follow at residues 4 to 24 (FLLCSFALVLLYPSGIDMYLV), 38 to 58 (AQLHIAFSVYLAGMASAMLFA), 69 to 89 (PVAIVGAAIFVIASLICAQVH), 95 to 115 (LIGRFIQGIAAGSCYVVAFAI), 131 to 151 (LLNGITCIIPVLAPVLGHLIM), 158 to 178 (SLFYTMTGMGVMVAVLSVFIL), 209 to 229 (LLITTLSVTVILTYVNVSPVL), 246 to 266 (ALMAMISMAVSFSTPFVLSLF), 270 to 290 (TLMLTSQVLFLAAGVTLSLAT), 294 to 314 (VTLIGLGMICAGFSVGFGVAM), 331 to 351 (VLGIAQVCGSSLWIWLAAIIG), and 357 to 377 (MLIGILIACSIVSLVLLLVVT).

It belongs to the major facilitator superfamily. DHA1 family. MdtL (TC 2.A.1.2.22) subfamily.

Its subcellular location is the cell inner membrane. The polypeptide is Multidrug resistance protein MdtL (Klebsiella pneumoniae subsp. pneumoniae (strain ATCC 700721 / MGH 78578)).